Reading from the N-terminus, the 159-residue chain is Phosphopantetheine adenylyltransferase (159 aa).

T9 lines the substrate pocket. Residues 9-10 (TF) and H17 each bind ATP. Substrate is bound by residues K41, L73, and R87. ATP-binding positions include 88–90 (GLR), E98, and 123–129 (YSFISST).

This sequence belongs to the bacterial CoaD family. As to quaternary structure, homohexamer. Mg(2+) serves as cofactor.

Its subcellular location is the cytoplasm. The enzyme catalyses (R)-4'-phosphopantetheine + ATP + H(+) = 3'-dephospho-CoA + diphosphate. The protein operates within cofactor biosynthesis; coenzyme A biosynthesis; CoA from (R)-pantothenate: step 4/5. In terms of biological role, reversibly transfers an adenylyl group from ATP to 4'-phosphopantetheine, yielding dephospho-CoA (dPCoA) and pyrophosphate. This chain is Phosphopantetheine adenylyltransferase, found in Pseudomonas aeruginosa (strain LESB58).